The sequence spans 252 residues: C-X-C motif chemokine 16 (252 aa).

Positions 1–25 (MMLGRTSRLLLVLLFIAYATTSGNG) are cleaved as a signal peptide. Over 26–198 (NEGSKVGSCP…RGPQAGTSAT (173 aa)) the chain is Extracellular. 2 disulfide bridges follow: Cys34–Cys64 and Cys36–Cys78. 2 disordered regions span residues 115–145 (LPEPTEAAPSDTATTSQTYLPSTLQRTQQPT) and 163–195 (TTTYTSGHSLGAEPEAKENQKQLKENRGPQAGT). Polar residues predominate over residues 125–145 (DTATTSQTYLPSTLQRTQQPT). Positions 176–189 (PEAKENQKQLKENR) are enriched in basic and acidic residues. A helical transmembrane segment spans residues 199–219 (VPVLSLLAIVFILAGVLLYVV). Residues 220–252 (CKRRKNQLLQHPPDLAASLYTCSRRTRAENGTL) are Cytoplasmic-facing.

The protein belongs to the intercrine alpha (chemokine CxC) family. Glycosylated.

The protein localises to the membrane. In terms of biological role, induces a strong chemotactic response. Induces calcium mobilization. Binds to CXCR6/Bonzo. Also acts as a scavenger receptor on macrophages, which specifically binds to OxLDL (oxidized low density lipoprotein), suggesting that it may be involved in pathophysiology such as atherogenesis. The sequence is that of C-X-C motif chemokine 16 (CXCL16) from Bos taurus (Bovine).